The chain runs to 324 residues: Rho crystallin (324 aa).

An N-acetylthreonine modification is found at threonine 2. 218–281 (SVLGSHRDRN…SFTPARIKQN (64 aa)) is an NADP(+) binding site.

Belongs to the aldo/keto reductase family. As to quaternary structure, monomer.

The protein is Rho crystallin of Aquarana catesbeiana (American bullfrog).